Here is a 429-residue protein sequence, read N- to C-terminus: Choline kinase A2 (429 aa).

ATP is bound by residues 82 to 88 (KGGMSNM), Arg111, 152 to 158 (EYIPSRP), and Gln257. 84–86 (GMS) contacts substrate. Glu258 lines the Ca(2+) pocket. Asp301 contributes to the ATP binding site. Ca(2+) is bound by residues Glu320 and Ile323.

It belongs to the choline/ethanolamine kinase family. In terms of assembly, homodimer. A small proportion exists as higher oligomers. The cofactor is Mg(2+).

It carries out the reaction choline + ATP = phosphocholine + ADP + H(+). The enzyme catalyses ethanolamine + ATP = phosphoethanolamine + ADP + H(+). The protein operates within phospholipid metabolism; phosphatidylcholine biosynthesis; phosphocholine from choline: step 1/1. Its pathway is phospholipid metabolism; phosphatidylethanolamine biosynthesis; phosphatidylethanolamine from ethanolamine: step 1/3. With respect to regulation, inhibited by Ca(2+). Mild inhibition by high levels of Mg(2+)(&gt;10 mM). Catalyzes the first step in phosphatidylcholine biosynthesis. May contribute to phosphatidylethanolamine biosynthesis. Phosphorylates choline and ethanolamine but the activity is much higher with choline. This chain is Choline kinase A2, found in Caenorhabditis elegans.